A 350-amino-acid chain; its full sequence is Ribosomal RNA large subunit methyltransferase M (350 aa).

Residues 217-220 (APGG), D236, D256, and D272 contribute to the S-adenosyl-L-methionine site. K301 functions as the Proton acceptor in the catalytic mechanism.

This sequence belongs to the class I-like SAM-binding methyltransferase superfamily. RNA methyltransferase RlmE family. RlmM subfamily. In terms of assembly, monomer.

It is found in the cytoplasm. The catalysed reaction is cytidine(2498) in 23S rRNA + S-adenosyl-L-methionine = 2'-O-methylcytidine(2498) in 23S rRNA + S-adenosyl-L-homocysteine + H(+). Its function is as follows. Catalyzes the 2'-O-methylation at nucleotide C2498 in 23S rRNA. The protein is Ribosomal RNA large subunit methyltransferase M of Teredinibacter turnerae (strain ATCC 39867 / T7901).